A 120-amino-acid polypeptide reads, in one-letter code: Large ribosomal subunit protein uL18 (120 aa).

The segment at 1–25 (MKQTRTAARQSRHQRIRRKVKGTSD) is disordered. Positions 10 to 21 (QSRHQRIRRKVK) are enriched in basic residues.

The protein belongs to the universal ribosomal protein uL18 family. In terms of assembly, part of the 50S ribosomal subunit; part of the 5S rRNA/L5/L18/L25 subcomplex. Contacts the 5S and 23S rRNAs.

Functionally, this is one of the proteins that bind and probably mediate the attachment of the 5S RNA into the large ribosomal subunit, where it forms part of the central protuberance. The sequence is that of Large ribosomal subunit protein uL18 from Thermosynechococcus vestitus (strain NIES-2133 / IAM M-273 / BP-1).